We begin with the raw amino-acid sequence, 583 residues long: Ankyrin repeat-containing protein NPR4 (583 aa).

7 ANK repeats span residues 68–97 (HNDT…AAVA), 119–148 (AGET…AEGV), 154–183 (SGYD…LLAK), 188–218 (ANTS…GLVE), 223–252 (NGKN…QLAR), 257–286 (KGQT…AIVM), and 291–321 (NGNT…HVNA). 4 helical membrane passes run 414-434 (VTVV…TVPG), 452-472 (IFFI…VVQI), 492-512 (LMWL…YIVL), and 518-538 (WAAL…LGTM).

Its subcellular location is the cell membrane. Its function is as follows. Involved in salt stress tolerance. In Oryza sativa subsp. japonica (Rice), this protein is Ankyrin repeat-containing protein NPR4.